Here is a 1976-residue protein sequence, read N- to C-terminus: Myosin-10 (1976 aa).

Arginine 18 carries the omega-N-methylarginine modification. One can recognise a Myosin N-terminal SH3-like domain in the interval 31–81 (TAKKLVWIPSERHGFEAASIKEERGDEVMVELAENGKKAMVNKDDIQKMNP). A Myosin motor domain is found at 85–783 (SKVEDMAELT…VLAHLEEERD (699 aa)). 178–185 (GESGAGKT) contacts ATP. Residue lysine 442 is modified to N6-acetyllysine. Residues 661 to 683 (LTKLMATLRNTNPNFVRCIIPNH) form an actin-binding region. Residues 786-815 (ITDIIIFFQAVCRGYLARKAFAKKQQQLSA) enclose the IQ domain. Positions 845–1976 (LQVTRQEEEL…VNETQPPQSE (1132 aa)) form a coiled coil. A disordered region spans residues 1125–1175 (EDFESEKASRNKAEKQKRDLSEELEALKTELEDTLDTTAAQQELRTKREQE). A compositionally biased stretch (basic and acidic residues) spans 1129-1155 (SEKASRNKAEKQKRDLSEELEALKTEL). Residue serine 1145 is modified to Phosphoserine. Lysine 1241, lysine 1301, and lysine 1645 each carry N6-acetyllysine. Disordered stretches follow at residues 1697–1718 (ASSE…DEIA) and 1874–1976 (KANA…PQSE). The span at 1698–1708 (SSERARRHAEQ) shows a compositional bias: basic and acidic residues. At arginine 1930 the chain carries Omega-N-methylarginine. Phosphoserine occurs at positions 1935, 1937, 1938, and 1939. The residue at position 1940 (arginine 1940) is an Omega-N-methylarginine. Serine 1952 and serine 1956 each carry phosphoserine. Threonine 1960 carries the post-translational modification Phosphothreonine. Residues 1967-1976 (VNETQPPQSE) show a composition bias toward polar residues. Serine 1975 bears the Phosphoserine mark.

It belongs to the TRAFAC class myosin-kinesin ATPase superfamily. Myosin family. In terms of assembly, myosin is a hexameric protein that consists of 2 heavy chain subunits (MHC), 2 alkali light chain subunits (MLC) and 2 regulatory light chain subunits (MLC-2). Interacts with PLEKHG6. Interacts with ECPAS. Interacts with KIF26B. Interacts with LARP6. Interacts with MCC. Interacts with CFAP95. Post-translationally, phosphorylated by ABL2.

The protein resides in the cell projection. It localises to the lamellipodium. In terms of biological role, involved with LARP6 in the stabilization of type I collagen mRNAs for CO1A1 and CO1A2. During cell spreading, plays an important role in cytoskeleton reorganization, focal contacts formation (in the central part but not the margins of spreading cells), and lamellipodial extension; this function is mechanically antagonized by MYH9. Cellular myosin that appears to play a role in cytokinesis, cell shape, and specialized functions such as secretion and capping. This is Myosin-10 (Myh10) from Rattus norvegicus (Rat).